We begin with the raw amino-acid sequence, 444 residues long: Exodeoxyribonuclease 7 large subunit (444 aa).

This sequence belongs to the XseA family. In terms of assembly, heterooligomer composed of large and small subunits.

It is found in the cytoplasm. It catalyses the reaction Exonucleolytic cleavage in either 5'- to 3'- or 3'- to 5'-direction to yield nucleoside 5'-phosphates.. Bidirectionally degrades single-stranded DNA into large acid-insoluble oligonucleotides, which are then degraded further into small acid-soluble oligonucleotides. This is Exodeoxyribonuclease 7 large subunit from Rickettsia canadensis (strain McKiel).